The sequence spans 622 residues: Phosphoribomutase (622 aa).

Substrate-binding positions include T57, R61, 158 to 159, and K168; that span reads SH. S158 serves as the catalytic Phosphoserine intermediate. Position 158 (S158) interacts with Mg(2+). S158 bears the Phosphoserine mark. Mg(2+) contacts are provided by D325, D327, and D329. Residues 329-330, T404, 428-430, and K442 each bind substrate; these read DR and EEA.

This sequence belongs to the phosphohexose mutase family. Mg(2+) serves as cofactor.

Its subcellular location is the cytoplasm. The protein localises to the nucleus. The enzyme catalyses alpha-D-ribose 1-phosphate = D-ribose 5-phosphate. Major phosphoribomutase that converts ribose 1-phosphate to ribose 5-phosphate. Involved in ribose salvage via the pentose phosphate pathway. The polypeptide is Phosphoribomutase (Saccharomyces cerevisiae (strain ATCC 204508 / S288c) (Baker's yeast)).